The chain runs to 161 residues: Nucleoside diphosphate kinase (161 aa).

ATP-binding residues include K13, F61, R89, T95, R106, and N116. The active-site Pros-phosphohistidine intermediate is H119.

The protein belongs to the NDK family. Mg(2+) is required as a cofactor.

The protein resides in the cytoplasm. It carries out the reaction a 2'-deoxyribonucleoside 5'-diphosphate + ATP = a 2'-deoxyribonucleoside 5'-triphosphate + ADP. The enzyme catalyses a ribonucleoside 5'-diphosphate + ATP = a ribonucleoside 5'-triphosphate + ADP. Major role in the synthesis of nucleoside triphosphates other than ATP. The ATP gamma phosphate is transferred to the NDP beta phosphate via a ping-pong mechanism, using a phosphorylated active-site intermediate. The sequence is that of Nucleoside diphosphate kinase from Halobacterium salinarum (strain ATCC 29341 / DSM 671 / R1).